Here is a 389-residue protein sequence, read N- to C-terminus: Gustatory receptor 68a (389 aa).

At 1–42 (MKIYQDIYPISKPSQIFAILPFYSGDVDDGFRFGGLGRWYGR) the chain is on the cytoplasmic side. The chain crosses the membrane as a helical span at residues 43–63 (LVALIILIGSLTLGEDVLFAS). Topologically, residues 64–82 (KEYRLVASAQGDTEEINRT) are extracellular. N80 carries an N-linked (GlcNAc...) asparagine glycan. The helical transmembrane segment at 83–103 (IETLLCIISYTMVVLSSVQNA) threads the bilayer. Over 104 to 133 (SRHFRTLHDIAKIDEYLLANGFRETYSCRN) the chain is Cytoplasmic. The helical transmembrane segment at 134–154 (LTILVTSAAGGVLAVAFYYIH) threads the bilayer. At 155–164 (YRSGIGAKRQ) the chain is on the extracellular side. Residues 165-185 (IILLLIYFLQLLYSTLLALYL) traverse the membrane as a helical segment. Topologically, residues 186-236 (RTLMMNLAQRIGFLNQKLDTFNLQDCGHMENWRELSNLIEVLCKFRYITEN) are cytoplasmic. A helical membrane pass occupies residues 237 to 257 (INCVAGVSLLFYFGFSFYTVT). Residue N258 is glycosylated (N-linked (GlcNAc...) asparagine). Residues 258–281 (NQSYLAFATLTAGSLSSKTEVADT) lie on the Extracellular side of the membrane. A helical membrane pass occupies residues 282–302 (IGLSCIWVLAETITMIVICSA). The Cytoplasmic portion of the chain corresponds to 303-352 (CDGLASEVNGTAQILARIYGKSKQFQNLIDKFLTKSIKQDLQFTAYGFFS). The chain crosses the membrane as a helical span at residues 353–373 (IDNSTLFKIFSAVTTYLVILI). Over 374-389 (QFKQLEDSKVEDISQA) the chain is Extracellular.

Belongs to the insect chemoreceptor superfamily. Gustatory receptor (GR) family. Gr21a subfamily. As to expression, expressed in chemosensory neurons of about 20 male-specific gustatory bristles in the forelegs. No expression is seen in the mechanosensory neurons. In larvae, expressed in the ventral pharyngeal sense organ.

Its subcellular location is the cell membrane. Its function is as follows. Dsx-dependent essential component of pheromone-driven courtship behavior. Recognizes a female pheromone involved in the second step (tapping step) of the courtship display which is essential for efficient execution of the entire courtship sequence and timely mating. Required for detection of the male sex pheromone CH503 which is transferred from males to females during mating and inhibits courtship behavior by other males. Gr68a-expressing neurons in the male foreleg relay signals to the suboesophageal zone (SEZ) and courtship suppression is mediated by the release of the neuropeptide tachykinin from a cluster of 8-10 neurons in the SEZ. This is Gustatory receptor 68a (Gr68a) from Drosophila melanogaster (Fruit fly).